The chain runs to 865 residues: FO synthase (865 aa).

The interval 1 to 21 is disordered; sequence MIEGVTELATPNVPPAPPSPS. Radical SAM core domains are found at residues 76–320 and 544–785; these read ITYS…LGPD and VTYV…DNIQ. The tract at residues 77-409 is cofG-like; the sequence is TYSRNVFIPL…PRIGAHVAAL (333 aa). 6 residues coordinate [4Fe-4S] cluster: cysteine 90, cysteine 94, cysteine 97, cysteine 558, cysteine 562, and cysteine 565. The interval 521 to 854 is cofH-like; sequence DGAELDAVAA…RERTTVYGRV (334 aa).

In the N-terminal section; belongs to the radical SAM superfamily. CofG family. The protein in the C-terminal section; belongs to the radical SAM superfamily. CofH family. It depends on [4Fe-4S] cluster as a cofactor.

The catalysed reaction is 5-amino-6-(D-ribitylamino)uracil + L-tyrosine + S-adenosyl-L-methionine = 5-amino-5-(4-hydroxybenzyl)-6-(D-ribitylimino)-5,6-dihydrouracil + 2-iminoacetate + 5'-deoxyadenosine + L-methionine + H(+). It catalyses the reaction 5-amino-5-(4-hydroxybenzyl)-6-(D-ribitylimino)-5,6-dihydrouracil + S-adenosyl-L-methionine = 7,8-didemethyl-8-hydroxy-5-deazariboflavin + 5'-deoxyadenosine + L-methionine + NH4(+) + H(+). Its pathway is cofactor biosynthesis; coenzyme F0 biosynthesis. Its function is as follows. Catalyzes the radical-mediated synthesis of 7,8-didemethyl-8-hydroxy-5-deazariboflavin (FO) from 5-amino-6-(D-ribitylamino)uracil and L-tyrosine. This is FO synthase (fbiC) from Nocardia farcinica (strain IFM 10152).